The primary structure comprises 111 residues: Probable 4-amino-4-deoxy-L-arabinose-phosphoundecaprenol flippase subunit ArnE (111 aa).

The next 3 helical transmembrane spans lie at 38 to 58 (LWLG…LLVL), 61 to 81 (LPVG…TLAA), and 91 to 111 (PRHW…GSAA). An EamA domain is found at 40–109 (LGLALICMGA…IISGIIILGS (70 aa)).

The protein belongs to the ArnE family. Heterodimer of ArnE and ArnF.

The protein resides in the cell inner membrane. Its pathway is bacterial outer membrane biogenesis; lipopolysaccharide biosynthesis. Functionally, translocates 4-amino-4-deoxy-L-arabinose-phosphoundecaprenol (alpha-L-Ara4N-phosphoundecaprenol) from the cytoplasmic to the periplasmic side of the inner membrane. This chain is Probable 4-amino-4-deoxy-L-arabinose-phosphoundecaprenol flippase subunit ArnE, found in Salmonella heidelberg (strain SL476).